The following is a 245-amino-acid chain: 4-hydroxy-tetrahydrodipicolinate reductase (245 aa).

Residues 7–12 (GAKGKV), 75–77 (GTT), and 102–105 (APNF) each bind NAD(+). His-132 acts as the Proton donor/acceptor in catalysis. Position 133 (His-133) interacts with (S)-2,3,4,5-tetrahydrodipicolinate. Lys-136 acts as the Proton donor in catalysis. 142–143 (GT) is a binding site for (S)-2,3,4,5-tetrahydrodipicolinate.

It belongs to the DapB family.

It is found in the cytoplasm. It catalyses the reaction (S)-2,3,4,5-tetrahydrodipicolinate + NAD(+) + H2O = (2S,4S)-4-hydroxy-2,3,4,5-tetrahydrodipicolinate + NADH + H(+). The enzyme catalyses (S)-2,3,4,5-tetrahydrodipicolinate + NADP(+) + H2O = (2S,4S)-4-hydroxy-2,3,4,5-tetrahydrodipicolinate + NADPH + H(+). It participates in amino-acid biosynthesis; L-lysine biosynthesis via DAP pathway; (S)-tetrahydrodipicolinate from L-aspartate: step 4/4. Catalyzes the conversion of 4-hydroxy-tetrahydrodipicolinate (HTPA) to tetrahydrodipicolinate. The sequence is that of 4-hydroxy-tetrahydrodipicolinate reductase from Mycobacterium marinum (strain ATCC BAA-535 / M).